A 118-amino-acid polypeptide reads, in one-letter code: Large ribosomal subunit protein uL18 (118 aa).

This sequence belongs to the universal ribosomal protein uL18 family. In terms of assembly, part of the 50S ribosomal subunit; part of the 5S rRNA/L5/L18/L25 subcomplex. Contacts the 5S and 23S rRNAs.

This is one of the proteins that bind and probably mediate the attachment of the 5S RNA into the large ribosomal subunit, where it forms part of the central protuberance. The sequence is that of Large ribosomal subunit protein uL18 from Rickettsia peacockii (strain Rustic).